The chain runs to 388 residues: MRLTTVQRRFLVSTKAKVSGASISSTANTGSASAGAPNGQTRRRRRITEFKDALNLGPSFEDFVSGRAAGFTVVDPLEQMRQDREEYKKLPKWLKVPIPKGVNYHKLKKDVKELKLSTVCEEARCPNIGECWGGKDKSKATATIMLLGDTCTRGCRFCSVKTNRNPAKPDPTEPENTAEAISRWGLGYVVLTTVDRDDLPDGGAHHLAETVIKIKQKAPKTLVEALTGDFLGNLEMVDVMAKSGLDVYAHNLETVEALTPHVRDRRAGYRQSLNVLKRAKETVPSLITKTSVMLGLGETDDQIIQTMQDLRAINCDVITFGQYMRPTKRHMKVVEYVRPEKFDYWKDKAKEMGFLYCASGPLVRSSYKAGEAFIENVLNKRKQDNKRI.

A mitochondrion-targeting transit peptide spans 1 to 18 (MRLTTVQRRFLVSTKAKV). Residues 22 to 39 (SISSTANTGSASAGAPNG) show a composition bias toward low complexity. A disordered region spans residues 22–43 (SISSTANTGSASAGAPNGQTRR). Cysteine 120, cysteine 125, cysteine 131, cysteine 151, cysteine 155, cysteine 158, and serine 366 together coordinate [4Fe-4S] cluster. Residues 134-355 (GKDKSKATAT…KDKAKEMGFL (222 aa)) form the Radical SAM core domain.

It belongs to the radical SAM superfamily. Lipoyl synthase family. It depends on [4Fe-4S] cluster as a cofactor.

The protein resides in the mitochondrion. It carries out the reaction [[Fe-S] cluster scaffold protein carrying a second [4Fe-4S](2+) cluster] + N(6)-octanoyl-L-lysyl-[protein] + 2 oxidized [2Fe-2S]-[ferredoxin] + 2 S-adenosyl-L-methionine + 4 H(+) = [[Fe-S] cluster scaffold protein] + N(6)-[(R)-dihydrolipoyl]-L-lysyl-[protein] + 4 Fe(3+) + 2 hydrogen sulfide + 2 5'-deoxyadenosine + 2 L-methionine + 2 reduced [2Fe-2S]-[ferredoxin]. The protein operates within protein modification; protein lipoylation via endogenous pathway; protein N(6)-(lipoyl)lysine from octanoyl-[acyl-carrier-protein]: step 2/2. In terms of biological role, catalyzes the radical-mediated insertion of two sulfur atoms into the C-6 and C-8 positions of the octanoyl moiety bound to the lipoyl domains of lipoate-dependent enzymes, thereby converting the octanoylated domains into lipoylated derivatives. In Candida glabrata (strain ATCC 2001 / BCRC 20586 / JCM 3761 / NBRC 0622 / NRRL Y-65 / CBS 138) (Yeast), this protein is Lipoyl synthase, mitochondrial.